The following is a 497-amino-acid chain: Serine carboxypeptidase-like 20 (497 aa).

The signal sequence occupies residues 1–29; sequence MSIITMVWLMKVFVFVTLLSLVFVITESA. Disulfide bonds link C90/C386, C254/C266, and C289/C353. N111 and N146 each carry an N-linked (GlcNAc...) asparagine glycan. Residue S186 is part of the active site. N-linked (GlcNAc...) asparagine glycosylation occurs at N249. N-linked (GlcNAc...) asparagine glycosylation occurs at N405. The active site involves D421. N463 is a glycosylation site (N-linked (GlcNAc...) asparagine). H474 is an active-site residue. Residues 495 to 497 carry the Microbody targeting signal motif; the sequence is SKI.

This sequence belongs to the peptidase S10 family. Ubiquitous.

It is found in the secreted. Functionally, probable carboxypeptidase. The polypeptide is Serine carboxypeptidase-like 20 (SCPL20) (Arabidopsis thaliana (Mouse-ear cress)).